Reading from the N-terminus, the 196-residue chain is SPRY domain-containing protein 7 (196 aa).

The B30.2/SPRY domain occupies 1–184; that stretch reads MAASVFCCLR…FSEFYHTPPP (184 aa).

In Gallus gallus (Chicken), this protein is SPRY domain-containing protein 7 (SPRYD7).